The chain runs to 256 residues: 5-keto-4-deoxy-D-glucarate aldolase (256 aa).

Histidine 50 serves as the catalytic Proton acceptor. Substrate is bound at residue glutamine 151. Glutamate 153 serves as a coordination point for Mg(2+). 2 residues coordinate substrate: serine 178 and aspartate 179. Aspartate 179 serves as a coordination point for Mg(2+).

This sequence belongs to the HpcH/HpaI aldolase family. KDGluc aldolase subfamily. Homohexamer; trimer of dimers. The cofactor is Mg(2+).

It catalyses the reaction 5-dehydro-4-deoxy-D-glucarate = 2-hydroxy-3-oxopropanoate + pyruvate. The enzyme catalyses 2-dehydro-3-deoxy-D-glucarate = 2-hydroxy-3-oxopropanoate + pyruvate. The protein operates within carbohydrate acid metabolism; galactarate degradation; D-glycerate from galactarate: step 2/3. Its function is as follows. Catalyzes the reversible retro-aldol cleavage of both 5-keto-4-deoxy-D-glucarate and 2-keto-3-deoxy-D-glucarate to pyruvate and tartronic semialdehyde. The sequence is that of 5-keto-4-deoxy-D-glucarate aldolase from Salmonella paratyphi C (strain RKS4594).